The sequence spans 408 residues: Argininosuccinate synthase (408 aa).

ATP is bound by residues 9-17 and alanine 36; that span reads AYSGGLDTS. Residues tyrosine 87 and serine 92 each coordinate L-citrulline. Glycine 117 lines the ATP pocket. L-aspartate contacts are provided by threonine 119, asparagine 123, and aspartate 124. Asparagine 123 lines the L-citrulline pocket. The L-citrulline site is built by arginine 127, serine 176, serine 185, glutamate 261, and tyrosine 273.

This sequence belongs to the argininosuccinate synthase family. Type 1 subfamily. Homotetramer.

The protein localises to the cytoplasm. The enzyme catalyses L-citrulline + L-aspartate + ATP = 2-(N(omega)-L-arginino)succinate + AMP + diphosphate + H(+). It functions in the pathway amino-acid biosynthesis; L-arginine biosynthesis; L-arginine from L-ornithine and carbamoyl phosphate: step 2/3. This chain is Argininosuccinate synthase, found in Deinococcus deserti (strain DSM 17065 / CIP 109153 / LMG 22923 / VCD115).